A 218-amino-acid chain; its full sequence is MTQATNQTPGQDVPGAADVPAAAEGQGQGQGERRGGGGGRGGDRRGRGDRRGRGRDERDSEWQERVIQIRRVSKTVKGGKKMSFRAIVVVGNEKGQVGVGVGKAGDVIGAVKKGVADGKKHLVKVPLTRSNSIPTISTGRDGAASVLMRPAAPGTGVIAGGSIRTVLELAGIKNVLAKRLGSKTPLNNARAAMVALRDLRTHQDTAKERGITLEQIYS.

Polar residues predominate over residues 1–10 (MTQATNQTPG). The interval 1–63 (MTQATNQTPG…GRDERDSEWQ (63 aa)) is disordered. Residues 11–25 (QDVPGAADVPAAAEG) are compositionally biased toward low complexity. Residues 31 to 63 (GERRGGGGGRGGDRRGRGDRRGRGRDERDSEWQ) show a composition bias toward basic and acidic residues. Positions 62 to 125 (WQERVIQIRR…ADGKKHLVKV (64 aa)) constitute an S5 DRBM domain.

Belongs to the universal ribosomal protein uS5 family. As to quaternary structure, part of the 30S ribosomal subunit. Contacts proteins S4 and S8.

Functionally, with S4 and S12 plays an important role in translational accuracy. In terms of biological role, located at the back of the 30S subunit body where it stabilizes the conformation of the head with respect to the body. This chain is Small ribosomal subunit protein uS5, found in Synechococcus sp. (strain RCC307).